Here is a 1177-residue protein sequence, read N- to C-terminus: DNA-directed RNA polymerase subunit beta (1177 aa).

Positions 1-36 are disordered; the sequence is MEGCILADSRQSKTAASPSPSRPQSSSNNSVPGAPN. Residues 17 to 32 show a composition bias toward low complexity; the sequence is SPSPSRPQSSSNNSVP.

Belongs to the RNA polymerase beta chain family. In terms of assembly, the RNAP catalytic core consists of 2 alpha, 1 beta, 1 beta' and 1 omega subunit. When a sigma factor is associated with the core the holoenzyme is formed, which can initiate transcription.

The enzyme catalyses RNA(n) + a ribonucleoside 5'-triphosphate = RNA(n+1) + diphosphate. In terms of biological role, DNA-dependent RNA polymerase catalyzes the transcription of DNA into RNA using the four ribonucleoside triphosphates as substrates. The protein is DNA-directed RNA polymerase subunit beta of Mycobacterium tuberculosis (strain ATCC 25177 / H37Ra).